The sequence spans 478 residues: UDP-N-acetylmuramate--L-alanine ligase (478 aa).

Residue 122–128 coordinates ATP; sequence GTHGKTT.

It belongs to the MurCDEF family.

It localises to the cytoplasm. The catalysed reaction is UDP-N-acetyl-alpha-D-muramate + L-alanine + ATP = UDP-N-acetyl-alpha-D-muramoyl-L-alanine + ADP + phosphate + H(+). It participates in cell wall biogenesis; peptidoglycan biosynthesis. Functionally, cell wall formation. This Stenotrophomonas maltophilia (strain R551-3) protein is UDP-N-acetylmuramate--L-alanine ligase.